Here is a 190-residue protein sequence, read N- to C-terminus: Guanylate kinase (190 aa).

Positions 3–185 (NYIFIISAPS…SLEQLCKYFE (183 aa)) constitute a Guanylate kinase-like domain. 10-17 (APSGAGKS) provides a ligand contact to ATP.

Belongs to the guanylate kinase family.

The protein resides in the cytoplasm. It carries out the reaction GMP + ATP = GDP + ADP. Its function is as follows. Essential for recycling GMP and indirectly, cGMP. This Francisella tularensis subsp. holarctica (strain OSU18) protein is Guanylate kinase.